We begin with the raw amino-acid sequence, 20 residues long: Putative serine protease (20 aa).

This sequence belongs to the peptidase S1 family.

It is found in the secreted. Functionally, binds the A.niger cell wall component alpha-1,3-glucan, a fungal pathogen-associated molecular pattern (PAMP) that activates the host immune response. This Galleria mellonella (Greater wax moth) protein is Putative serine protease.